Reading from the N-terminus, the 120-residue chain is Ribonuclease P protein component (120 aa).

The protein belongs to the RnpA family. In terms of assembly, consists of a catalytic RNA component (M1 or rnpB) and a protein subunit.

The catalysed reaction is Endonucleolytic cleavage of RNA, removing 5'-extranucleotides from tRNA precursor.. In terms of biological role, RNaseP catalyzes the removal of the 5'-leader sequence from pre-tRNA to produce the mature 5'-terminus. It can also cleave other RNA substrates such as 4.5S RNA. The protein component plays an auxiliary but essential role in vivo by binding to the 5'-leader sequence and broadening the substrate specificity of the ribozyme. The protein is Ribonuclease P protein component of Chlamydia trachomatis serovar D (strain ATCC VR-885 / DSM 19411 / UW-3/Cx).